Consider the following 509-residue polypeptide: ATP synthase subunit alpha (509 aa).

Residue 169–176 participates in ATP binding; sequence GDRQTGKT.

The protein belongs to the ATPase alpha/beta chains family. F-type ATPases have 2 components, CF(1) - the catalytic core - and CF(0) - the membrane proton channel. CF(1) has five subunits: alpha(3), beta(3), gamma(1), delta(1), epsilon(1). CF(0) has three main subunits: a(1), b(2) and c(9-12). The alpha and beta chains form an alternating ring which encloses part of the gamma chain. CF(1) is attached to CF(0) by a central stalk formed by the gamma and epsilon chains, while a peripheral stalk is formed by the delta and b chains.

The protein resides in the cell inner membrane. The catalysed reaction is ATP + H2O + 4 H(+)(in) = ADP + phosphate + 5 H(+)(out). In terms of biological role, produces ATP from ADP in the presence of a proton gradient across the membrane. The alpha chain is a regulatory subunit. The sequence is that of ATP synthase subunit alpha from Rhizobium johnstonii (strain DSM 114642 / LMG 32736 / 3841) (Rhizobium leguminosarum bv. viciae).